A 251-amino-acid chain; its full sequence is uncharacterized protein (251 aa).

Residues 207 to 251 (ATPHSKRGRTKLYRKEPPGDNRSPPPWQEPHGEGLAEKLSPGPAR) form a disordered region.

This is an uncharacterized protein from Treponema pallidum (strain Nichols).